A 405-amino-acid chain; its full sequence is 4-hydroxy-3-methylbut-2-enyl diphosphate reductase (405 aa).

Cys-66 is a [4Fe-4S] cluster binding site. His-96 lines the (2E)-4-hydroxy-3-methylbut-2-enyl diphosphate pocket. His-96 contributes to the dimethylallyl diphosphate binding site. His-96 contributes to the isopentenyl diphosphate binding site. Cys-158 lines the [4Fe-4S] cluster pocket. His-186 lines the (2E)-4-hydroxy-3-methylbut-2-enyl diphosphate pocket. Dimethylallyl diphosphate is bound at residue His-186. His-186 contributes to the isopentenyl diphosphate binding site. The active-site Proton donor is the Glu-188. Thr-251 lines the (2E)-4-hydroxy-3-methylbut-2-enyl diphosphate pocket. Residue Cys-289 coordinates [4Fe-4S] cluster. (2E)-4-hydroxy-3-methylbut-2-enyl diphosphate is bound by residues Ser-318, Ser-319, Asn-320, and Ser-380. Dimethylallyl diphosphate is bound by residues Ser-318, Ser-319, Asn-320, and Ser-380. Isopentenyl diphosphate is bound by residues Ser-318, Ser-319, Asn-320, and Ser-380.

It belongs to the IspH family. It depends on [4Fe-4S] cluster as a cofactor.

It carries out the reaction isopentenyl diphosphate + 2 oxidized [2Fe-2S]-[ferredoxin] + H2O = (2E)-4-hydroxy-3-methylbut-2-enyl diphosphate + 2 reduced [2Fe-2S]-[ferredoxin] + 2 H(+). It catalyses the reaction dimethylallyl diphosphate + 2 oxidized [2Fe-2S]-[ferredoxin] + H2O = (2E)-4-hydroxy-3-methylbut-2-enyl diphosphate + 2 reduced [2Fe-2S]-[ferredoxin] + 2 H(+). The protein operates within isoprenoid biosynthesis; dimethylallyl diphosphate biosynthesis; dimethylallyl diphosphate from (2E)-4-hydroxy-3-methylbutenyl diphosphate: step 1/1. It functions in the pathway isoprenoid biosynthesis; isopentenyl diphosphate biosynthesis via DXP pathway; isopentenyl diphosphate from 1-deoxy-D-xylulose 5-phosphate: step 6/6. Functionally, catalyzes the conversion of 1-hydroxy-2-methyl-2-(E)-butenyl 4-diphosphate (HMBPP) into a mixture of isopentenyl diphosphate (IPP) and dimethylallyl diphosphate (DMAPP). Acts in the terminal step of the DOXP/MEP pathway for isoprenoid precursor biosynthesis. This is 4-hydroxy-3-methylbut-2-enyl diphosphate reductase from Cyanothece sp. (strain PCC 7425 / ATCC 29141).